We begin with the raw amino-acid sequence, 445 residues long: tRNA modification GTPase MnmE (445 aa).

Positions 20, 79, and 119 each coordinate (6S)-5-formyl-5,6,7,8-tetrahydrofolate. The TrmE-type G domain occupies 215 to 371; that stretch reads GLKLAIIGPP…ILKNIENIAE (157 aa). Residue Asn225 participates in K(+) binding. GTP is bound by residues 225-230, 244-250, and 269-272; these read NVGKSS, SNIAGTT, and DTAG. Mg(2+) is bound at residue Ser229. Residues Ser244, Ile246, and Thr249 each contribute to the K(+) site. Thr250 provides a ligand contact to Mg(2+). Residue Lys445 participates in (6S)-5-formyl-5,6,7,8-tetrahydrofolate binding.

Belongs to the TRAFAC class TrmE-Era-EngA-EngB-Septin-like GTPase superfamily. TrmE GTPase family. Homodimer. Heterotetramer of two MnmE and two MnmG subunits. K(+) serves as cofactor.

The protein localises to the cytoplasm. Exhibits a very high intrinsic GTPase hydrolysis rate. Involved in the addition of a carboxymethylaminomethyl (cmnm) group at the wobble position (U34) of certain tRNAs, forming tRNA-cmnm(5)s(2)U34. This chain is tRNA modification GTPase MnmE, found in Rickettsia conorii (strain ATCC VR-613 / Malish 7).